Reading from the N-terminus, the 196-residue chain is Molybdenum cofactor guanylyltransferase (196 aa).

GTP contacts are provided by residues 10–12 (LAG), K23, N51, D69, and D99. D99 lines the Mg(2+) pocket.

It belongs to the MobA family. Monomer. The cofactor is Mg(2+).

It is found in the cytoplasm. The enzyme catalyses Mo-molybdopterin + GTP + H(+) = Mo-molybdopterin guanine dinucleotide + diphosphate. In terms of biological role, transfers a GMP moiety from GTP to Mo-molybdopterin (Mo-MPT) cofactor (Moco or molybdenum cofactor) to form Mo-molybdopterin guanine dinucleotide (Mo-MGD) cofactor. The protein is Molybdenum cofactor guanylyltransferase of Shewanella baltica (strain OS155 / ATCC BAA-1091).